The sequence spans 656 residues: Tetratricopeptide repeat protein 30 homolog (656 aa).

9 TPR repeats span residues 9-42 (EGEF…NPKN), 43-76 (LAAL…FPQY), 141-174 (AAVI…SGYQ), 176-208 (GLAY…GVKD), 238-271 (IEAF…NEHD), 378-412 (RKTA…DDSL), 416-449 (LPVL…CKEH), 451-484 (TWKL…KYDD), and 537-570 (SIIS…PEKK).

This sequence belongs to the TTC30/dfy-1/fleer family. Component of the IFT complex B composed of at least che-2, che-13, dyf-1, dyf-3, dyf-6, dyf-11, dyf-13, ift-20, ift-74, ift-81, ifta-2, osm-1, osm-5 and osm-6. Expressed in most amphid, both phasmid and several labial-quadrant neurons.

The protein resides in the cell projection. The protein localises to the cilium. In terms of biological role, plays a role in anterograde intraflagellar transport (IFT), the process by which cilia precursors are transported from the base of the cilium to the site of their incorporation at the tip. Specifically required for the kinesin osm-3 to dock onto and move the IFT particles which contain these precursors. Component of the intraflagellar transport (IFT) complex B required for transport of proteins in the motile cilium. May be required for ciliary entrance and transport of specific ciliary cargo proteins such as che-3 which are related to motility. Required for polyglutamylation of axonemal tubulin in sensory cilia. In Caenorhabditis elegans, this protein is Tetratricopeptide repeat protein 30 homolog.